The chain runs to 134 residues: MAEVVGYYGTGRRKTAVARVYLRPGEGKVKVNGKEYESLNDYFKNPAWTKHAIEPLEVTNTLGKFDLVIRVNGGGLSGQSGAVRLGIARALLQYDQNLRPVLKKYKMLTRDPREVERKKYGLKKARRAPQFSKR.

Residues 113–134 (REVERKKYGLKKARRAPQFSKR) are disordered. The span at 120 to 134 (YGLKKARRAPQFSKR) shows a compositional bias: basic residues.

This sequence belongs to the universal ribosomal protein uS9 family.

In Thermotoga maritima (strain ATCC 43589 / DSM 3109 / JCM 10099 / NBRC 100826 / MSB8), this protein is Small ribosomal subunit protein uS9 (rpsI).